The primary structure comprises 447 residues: tRNA-2-methylthio-N(6)-dimethylallyladenosine synthase (447 aa).

The region spanning 10-128 (KLFCISTYGC…FPEYLHRVLQ (119 aa)) is the MTTase N-terminal domain. The [4Fe-4S] cluster site is built by cysteine 19, cysteine 55, cysteine 89, cysteine 165, cysteine 169, and cysteine 172. In terms of domain architecture, Radical SAM core spans 151-382 (RKSDVKAFVT…EAINKKVVIK (232 aa)). The TRAM domain occupies 384–447 (KEYEGKVVEV…PFSLIGEIVE (64 aa)).

It belongs to the methylthiotransferase family. MiaB subfamily. In terms of assembly, monomer. [4Fe-4S] cluster is required as a cofactor.

It is found in the cytoplasm. It carries out the reaction N(6)-dimethylallyladenosine(37) in tRNA + (sulfur carrier)-SH + AH2 + 2 S-adenosyl-L-methionine = 2-methylsulfanyl-N(6)-dimethylallyladenosine(37) in tRNA + (sulfur carrier)-H + 5'-deoxyadenosine + L-methionine + A + S-adenosyl-L-homocysteine + 2 H(+). Functionally, catalyzes the methylthiolation of N6-(dimethylallyl)adenosine (i(6)A), leading to the formation of 2-methylthio-N6-(dimethylallyl)adenosine (ms(2)i(6)A) at position 37 in tRNAs that read codons beginning with uridine. The chain is tRNA-2-methylthio-N(6)-dimethylallyladenosine synthase from Clostridium perfringens (strain ATCC 13124 / DSM 756 / JCM 1290 / NCIMB 6125 / NCTC 8237 / Type A).